Consider the following 725-residue polypeptide: 1,4-alpha-glucan branching enzyme GlgB (725 aa).

Residue Asp403 is the Nucleophile of the active site. The active-site Proton donor is the Glu456.

Belongs to the glycosyl hydrolase 13 family. GlgB subfamily. Monomer.

It catalyses the reaction Transfers a segment of a (1-&gt;4)-alpha-D-glucan chain to a primary hydroxy group in a similar glucan chain.. It participates in glycan biosynthesis; glycogen biosynthesis. In terms of biological role, catalyzes the formation of the alpha-1,6-glucosidic linkages in glycogen by scission of a 1,4-alpha-linked oligosaccharide from growing alpha-1,4-glucan chains and the subsequent attachment of the oligosaccharide to the alpha-1,6 position. This is 1,4-alpha-glucan branching enzyme GlgB from Pectobacterium atrosepticum (strain SCRI 1043 / ATCC BAA-672) (Erwinia carotovora subsp. atroseptica).